Reading from the N-terminus, the 338-residue chain is Ketol-acid reductoisomerase (NADP(+)) (338 aa).

A KARI N-terminal Rossmann domain is found at 1 to 181 (MKVFYDKDAD…GGGKAGIIET (181 aa)). NADP(+) contacts are provided by residues 24–27 (YGSQ), Arg-47, and Ser-52. His-107 is an active-site residue. Gly-133 is a binding site for NADP(+). The region spanning 182-327 (NFREETETDL…EKLRAMMPWI (146 aa)) is the KARI C-terminal knotted domain. Mg(2+) is bound by residues Asp-190, Glu-194, Glu-226, and Glu-230. Ser-251 is a substrate binding site.

This sequence belongs to the ketol-acid reductoisomerase family. It depends on Mg(2+) as a cofactor.

It carries out the reaction (2R)-2,3-dihydroxy-3-methylbutanoate + NADP(+) = (2S)-2-acetolactate + NADPH + H(+). The catalysed reaction is (2R,3R)-2,3-dihydroxy-3-methylpentanoate + NADP(+) = (S)-2-ethyl-2-hydroxy-3-oxobutanoate + NADPH + H(+). It functions in the pathway amino-acid biosynthesis; L-isoleucine biosynthesis; L-isoleucine from 2-oxobutanoate: step 2/4. It participates in amino-acid biosynthesis; L-valine biosynthesis; L-valine from pyruvate: step 2/4. In terms of biological role, involved in the biosynthesis of branched-chain amino acids (BCAA). Catalyzes an alkyl-migration followed by a ketol-acid reduction of (S)-2-acetolactate (S2AL) to yield (R)-2,3-dihydroxy-isovalerate. In the isomerase reaction, S2AL is rearranged via a Mg-dependent methyl migration to produce 3-hydroxy-3-methyl-2-ketobutyrate (HMKB). In the reductase reaction, this 2-ketoacid undergoes a metal-dependent reduction by NADPH to yield (R)-2,3-dihydroxy-isovalerate. The protein is Ketol-acid reductoisomerase (NADP(+)) of Leptothrix cholodnii (strain ATCC 51168 / LMG 8142 / SP-6) (Leptothrix discophora (strain SP-6)).